A 381-amino-acid chain; its full sequence is UDP-4-amino-4-deoxy-L-arabinose--oxoglutarate aminotransferase (381 aa).

K182 bears the N6-(pyridoxal phosphate)lysine mark.

The protein belongs to the DegT/DnrJ/EryC1 family. ArnB subfamily. Homodimer. It depends on pyridoxal 5'-phosphate as a cofactor.

It carries out the reaction UDP-4-amino-4-deoxy-beta-L-arabinose + 2-oxoglutarate = UDP-beta-L-threo-pentopyranos-4-ulose + L-glutamate. It functions in the pathway nucleotide-sugar biosynthesis; UDP-4-deoxy-4-formamido-beta-L-arabinose biosynthesis; UDP-4-deoxy-4-formamido-beta-L-arabinose from UDP-alpha-D-glucuronate: step 2/3. It participates in bacterial outer membrane biogenesis; lipopolysaccharide biosynthesis. In terms of biological role, catalyzes the conversion of UDP-4-keto-arabinose (UDP-Ara4O) to UDP-4-amino-4-deoxy-L-arabinose (UDP-L-Ara4N). The modified arabinose is attached to lipid A and is required for resistance to polymyxin and cationic antimicrobial peptides. In Proteus mirabilis (strain HI4320), this protein is UDP-4-amino-4-deoxy-L-arabinose--oxoglutarate aminotransferase.